The chain runs to 54 residues: Ovomucoid (54 aa).

A Kazal-like domain is found at 4–54 (VDCSEYPKPACTMEHRPLCGSDNQTYDNKCNFCNAVVESNGTLTLSHFGKC). Intrachain disulfides connect C6–C36, C14–C33, and C22–C54. N43 is a glycosylation site (N-linked (GlcNAc...) asparagine).

Its subcellular location is the secreted. The chain is Ovomucoid from Guttera pucherani (Eastern crested guineafowl).